The following is a 179-amino-acid chain: DNA utilization protein HofN (179 aa).

The chain crosses the membrane as a helical span at residues 19–39 (LRFWLLMFVAPLLLAVGITLI).

Its subcellular location is the cell inner membrane. Its function is as follows. Required for the use of extracellular DNA as a nutrient. The polypeptide is DNA utilization protein HofN (hofN) (Escherichia coli (strain K12)).